The primary structure comprises 146 residues: Anti-sigma F factor (146 aa).

The protein belongs to the anti-sigma-factor family.

The enzyme catalyses L-seryl-[protein] + ATP = O-phospho-L-seryl-[protein] + ADP + H(+). The catalysed reaction is L-threonyl-[protein] + ATP = O-phospho-L-threonyl-[protein] + ADP + H(+). Its function is as follows. Binds to sigma F and blocks its ability to form an RNA polymerase holoenzyme (E-sigma F). Phosphorylates SpoIIAA on a serine residue. This phosphorylation may enable SpoIIAA to act as an anti-anti-sigma factor that counteracts SpoIIAB and thus releases sigma F from inhibition. This is Anti-sigma F factor (spoIIAB) from Bacillus subtilis (strain 168).